A 959-amino-acid polypeptide reads, in one-letter code: Leucine--tRNA ligase (959 aa).

The short motif at 39–49 (PYVNAYPHLGS) is the 'HIGH' region element. The short motif at 637–641 (KMSKS) is the 'KMSKS' region element. Residue K640 participates in ATP binding. The interval 933 to 959 (TEEDGGSPRRANALPGRPALYAEKRGG) is disordered.

Belongs to the class-I aminoacyl-tRNA synthetase family.

The protein resides in the cytoplasm. The enzyme catalyses tRNA(Leu) + L-leucine + ATP = L-leucyl-tRNA(Leu) + AMP + diphosphate. This Aeropyrum pernix (strain ATCC 700893 / DSM 11879 / JCM 9820 / NBRC 100138 / K1) protein is Leucine--tRNA ligase.